The following is a 193-amino-acid chain: Adenylate kinase (193 aa).

11 to 16 is a binding site for ATP; sequence GAGKGT. The tract at residues 31–60 is NMP; that stretch reads STGDLLRAEVKAQTPLGCQAKVYMDAGELV. AMP contacts are provided by residues Thr32, Arg37, 58–60, 85–88, and Gln92; these read ELV and GFPR. The segment at 126-136 is LID; that stretch reads ARGKEQGRSDD. Position 127 (Arg127) interacts with ATP. AMP is bound by residues Arg133 and Arg145. Gln173 is a binding site for ATP.

Belongs to the adenylate kinase family. As to quaternary structure, monomer.

The protein resides in the cytoplasm. The catalysed reaction is AMP + ATP = 2 ADP. It functions in the pathway purine metabolism; AMP biosynthesis via salvage pathway; AMP from ADP: step 1/1. In terms of biological role, catalyzes the reversible transfer of the terminal phosphate group between ATP and AMP. Plays an important role in cellular energy homeostasis and in adenine nucleotide metabolism. The polypeptide is Adenylate kinase (Synechococcus sp. (strain JA-2-3B'a(2-13)) (Cyanobacteria bacterium Yellowstone B-Prime)).